Here is a 475-residue protein sequence, read N- to C-terminus: Bifunctional protein HldE (475 aa).

The segment at 1–318 is ribokinase; that stretch reads MMQYSPKFNN…ENAIHHREET (318 aa). An ATP-binding site is contributed by 195–198; that stretch reads NMSE. Asp-264 is a catalytic residue. The tract at residues 344 to 475 is cytidylyltransferase; the sequence is MTNGCFDILH…NVIKKIQASK (132 aa).

The protein in the N-terminal section; belongs to the carbohydrate kinase PfkB family. It in the C-terminal section; belongs to the cytidylyltransferase family. In terms of assembly, homodimer.

The enzyme catalyses D-glycero-beta-D-manno-heptose 7-phosphate + ATP = D-glycero-beta-D-manno-heptose 1,7-bisphosphate + ADP + H(+). It catalyses the reaction D-glycero-beta-D-manno-heptose 1-phosphate + ATP + H(+) = ADP-D-glycero-beta-D-manno-heptose + diphosphate. It participates in nucleotide-sugar biosynthesis; ADP-L-glycero-beta-D-manno-heptose biosynthesis; ADP-L-glycero-beta-D-manno-heptose from D-glycero-beta-D-manno-heptose 7-phosphate: step 1/4. It functions in the pathway nucleotide-sugar biosynthesis; ADP-L-glycero-beta-D-manno-heptose biosynthesis; ADP-L-glycero-beta-D-manno-heptose from D-glycero-beta-D-manno-heptose 7-phosphate: step 3/4. Functionally, catalyzes the phosphorylation of D-glycero-D-manno-heptose 7-phosphate at the C-1 position to selectively form D-glycero-beta-D-manno-heptose-1,7-bisphosphate. In terms of biological role, catalyzes the ADP transfer from ATP to D-glycero-beta-D-manno-heptose 1-phosphate, yielding ADP-D-glycero-beta-D-manno-heptose. The sequence is that of Bifunctional protein HldE from Actinobacillus pleuropneumoniae serotype 5b (strain L20).